A 329-amino-acid polypeptide reads, in one-letter code: PTS-dependent dihydroxyacetone kinase 1, dihydroxyacetone-binding subunit DhaK (329 aa).

In terms of domain architecture, DhaK spans 7 to 329 (GTDQVVEQMV…LKLPVDTIAW (323 aa)). Residues 53 to 56 (GSGH), Lys-104, and Asp-109 each bind dihydroxyacetone. The Proton acceptor role is filled by His-56. The active-site Tele-hemiaminal-histidine intermediate is His-218.

Homodimer. The dihydroxyacetone kinase complex is composed of a homodimer of DhaM, a homodimer of DhaK and the subunit DhaL.

It localises to the cytoplasm. It catalyses the reaction dihydroxyacetone + phosphoenolpyruvate = dihydroxyacetone phosphate + pyruvate. The protein operates within polyol metabolism; glycerol degradation. Dihydroxyacetone binding subunit of the dihydroxyacetone kinase, which is responsible for the phosphoenolpyruvate (PEP)-dependent phosphorylation of dihydroxyacetone via a phosphoryl group transfer from DhaL-ATP. The chain is PTS-dependent dihydroxyacetone kinase 1, dihydroxyacetone-binding subunit DhaK from Listeria innocua serovar 6a (strain ATCC BAA-680 / CLIP 11262).